A 215-amino-acid chain; its full sequence is Adenylate kinase (215 aa).

10–15 is a binding site for ATP; sequence GTGKGT. The segment at 30-59 is NMP; sequence STGDMLRESVVLKNKIGMIIKNIIEEGKLV. AMP-binding positions include Thr31, Arg36, 57–59, 85–88, and Gln92; these read KLV and GFPR. The interval 122 to 159 is LID; it reads GRRIHIQSGRIYHVKFKPPKIKDKDDLTGQTLITRKDD. ATP-binding positions include Arg123 and 132-133; that span reads IY. Residues Arg156 and Arg167 each coordinate AMP. Leu200 serves as a coordination point for ATP.

It belongs to the adenylate kinase family. In terms of assembly, monomer.

It is found in the cytoplasm. The catalysed reaction is AMP + ATP = 2 ADP. Its pathway is purine metabolism; AMP biosynthesis via salvage pathway; AMP from ADP: step 1/1. In terms of biological role, catalyzes the reversible transfer of the terminal phosphate group between ATP and AMP. Plays an important role in cellular energy homeostasis and in adenine nucleotide metabolism. This chain is Adenylate kinase, found in Buchnera aphidicola subsp. Acyrthosiphon pisum (strain 5A).